The primary structure comprises 279 residues: Energy-coupling factor transporter ATP-binding protein EcfA1 (279 aa).

In terms of domain architecture, ABC transporter spans 8–240 (IKFENVSFSY…KQFLRDINLD (233 aa)). An ATP-binding site is contributed by 41 to 48 (GHNGSGKS).

It belongs to the ABC transporter superfamily. Energy-coupling factor EcfA family. As to quaternary structure, forms a stable energy-coupling factor (ECF) transporter complex composed of 2 membrane-embedded substrate-binding proteins (S component), 2 ATP-binding proteins (A component) and 2 transmembrane proteins (T component).

Its subcellular location is the cell membrane. In terms of biological role, ATP-binding (A) component of a common energy-coupling factor (ECF) ABC-transporter complex. Unlike classic ABC transporters this ECF transporter provides the energy necessary to transport a number of different substrates. This Mycoplasmoides gallisepticum (strain R(low / passage 15 / clone 2)) (Mycoplasma gallisepticum) protein is Energy-coupling factor transporter ATP-binding protein EcfA1.